The primary structure comprises 70 residues: Beta-defensin 43 (70 aa).

An N-terminal signal peptide occupies residues 1–22 (MRLLLSILGVLTLLSILPLARS). 2 disulfide bridges follow: cysteine 29–cysteine 57 and cysteine 36–cysteine 50.

It belongs to the beta-defensin family.

It localises to the secreted. Has bactericidal activity. This is Beta-defensin 43 (Defb43) from Rattus norvegicus (Rat).